The chain runs to 348 residues: UDP-glucose 4-epimerase (348 aa).

NAD(+) contacts are provided by residues 12-14 (GYI), 33-37 (DNFHN), 66-67 (DI), Phe88, and Lys92. Residue 132-134 (SAT) participates in substrate binding. Tyr157 acts as the Proton acceptor in catalysis. NAD(+) is bound by residues Lys161 and Tyr185. Residues 185–187 (YFN), 206–208 (NNL), 224–226 (NVF), Arg239, and 300–303 (REGD) contribute to the substrate site.

Belongs to the NAD(P)-dependent epimerase/dehydratase family. As to quaternary structure, homodimer. It depends on NAD(+) as a cofactor.

It carries out the reaction UDP-alpha-D-glucose = UDP-alpha-D-galactose. The enzyme catalyses UDP-N-acetyl-alpha-D-glucosamine = UDP-N-acetyl-alpha-D-galactosamine. The protein operates within carbohydrate metabolism; galactose metabolism. Catalyzes two distinct but analogous reactions: the reversible epimerization of UDP-glucose to UDP-galactose and the reversible epimerization of UDP-N-acetylglucosamine to UDP-N-acetylgalactosamine. The reaction with UDP-Gal plays a critical role in the Leloir pathway of galactose catabolism in which galactose is converted to the glycolytic intermediate glucose 6-phosphate. It contributes to the catabolism of dietary galactose and enables the endogenous biosynthesis of both UDP-Gal and UDP-GalNAc when exogenous sources are limited. Both UDP-sugar interconversions are important in the synthesis of glycoproteins and glycolipids. The chain is UDP-glucose 4-epimerase from Homo sapiens (Human).